The primary structure comprises 328 residues: D-cysteine desulfhydrase (328 aa).

Lys51 carries the N6-(pyridoxal phosphate)lysine modification.

Belongs to the ACC deaminase/D-cysteine desulfhydrase family. As to quaternary structure, homodimer. Requires pyridoxal 5'-phosphate as cofactor.

The enzyme catalyses D-cysteine + H2O = hydrogen sulfide + pyruvate + NH4(+) + H(+). Functionally, catalyzes the alpha,beta-elimination reaction of D-cysteine and of several D-cysteine derivatives. It could be a defense mechanism against D-cysteine. The chain is D-cysteine desulfhydrase from Escherichia coli O6:H1 (strain CFT073 / ATCC 700928 / UPEC).